The primary structure comprises 59 residues: Large ribosomal subunit protein bL32 (59 aa).

The protein belongs to the bacterial ribosomal protein bL32 family.

This is Large ribosomal subunit protein bL32 from Mesoplasma florum (strain ATCC 33453 / NBRC 100688 / NCTC 11704 / L1) (Acholeplasma florum).